Reading from the N-terminus, the 373-residue chain is GTP cyclohydrolase 1 type 2 homolog (373 aa).

A divalent metal cation-binding residues include H67, H68, D106, H333, and E336.

Belongs to the GTP cyclohydrolase I type 2/NIF3 family. In terms of assembly, homohexamer.

This Listeria monocytogenes serovar 1/2a (strain ATCC BAA-679 / EGD-e) protein is GTP cyclohydrolase 1 type 2 homolog.